The following is a 181-amino-acid chain: Adenylate kinase (181 aa).

10–15 provides a ligand contact to ATP; the sequence is GAGKGT. Residues 30–59 are NMP; it reads STGELFRRNIEKDTKLGHEAKKYLDAGDLV. AMP-binding positions include T31, R36, 57–59, 85–88, and Q92; these read DLV and GYPR. Residues 126–132 form an LID region; sequence GRGRADD. ATP is bound at residue R127. AMP-binding residues include R129 and R140. Residue G166 coordinates ATP.

The protein belongs to the adenylate kinase family. Monomer.

Its subcellular location is the cytoplasm. It catalyses the reaction AMP + ATP = 2 ADP. Its pathway is purine metabolism; AMP biosynthesis via salvage pathway; AMP from ADP: step 1/1. Catalyzes the reversible transfer of the terminal phosphate group between ATP and AMP. Plays an important role in cellular energy homeostasis and in adenine nucleotide metabolism. This Mycobacterium leprae (strain Br4923) protein is Adenylate kinase.